The sequence spans 537 residues: GTPase LSG1-1 (537 aa).

The 205-residue stretch at 158-362 (WRQLWRVLER…LCDCPGLVFP (205 aa)) folds into the CP-type G domain. A DARXP motif motif is present at residues 176–180 (DARDP). The segment at 206-209 (NKAD) is G4. Residue 206 to 209 (NKAD) participates in GTP binding. The G5 stretch occupies residues 234–236 (SAK). The tract at residues 311–318 (GYPNVGKS) is G1. 314 to 319 (NVGKSS) provides a ligand contact to GTP. Residues 337–341 (GKTKH) are G2. A G3 region spans residues 355–358 (DCPG). G358 is a GTP binding site. A disordered region spans residues 484–508 (LGAETREGSQTEKKGEEAPSLGLDQ). Positions 487 to 500 (ETREGSQTEKKGEE) are enriched in basic and acidic residues.

Belongs to the TRAFAC class YlqF/YawG GTPase family. Ubiquitous, with the highest expression in stem and hypsophyll on day 66.

The protein localises to the cytoplasm. Functionally, GTPase that might be redundant with LSG1-2 for ribosome biogenesis. Binds to 23S rRNA. The polypeptide is GTPase LSG1-1 (Arabidopsis thaliana (Mouse-ear cress)).